The primary structure comprises 563 residues: NAD-dependent malic enzyme (563 aa).

The active-site Proton donor is Tyr-101. Arg-154 serves as a coordination point for NAD(+). Lys-172 functions as the Proton acceptor in the catalytic mechanism. Residues Glu-243, Asp-244, and Asp-267 each contribute to the a divalent metal cation site. Residues Asp-267 and Asn-416 each contribute to the NAD(+) site.

This sequence belongs to the malic enzymes family. In terms of assembly, homotetramer. It depends on Mg(2+) as a cofactor. Mn(2+) serves as cofactor.

The enzyme catalyses (S)-malate + NAD(+) = pyruvate + CO2 + NADH. It catalyses the reaction oxaloacetate + H(+) = pyruvate + CO2. This chain is NAD-dependent malic enzyme, found in Pseudomonas savastanoi pv. phaseolicola (strain 1448A / Race 6) (Pseudomonas syringae pv. phaseolicola (strain 1448A / Race 6)).